Reading from the N-terminus, the 237-residue chain is Thiamine-phosphate synthase (237 aa).

Residues 41-45 (QLRDK) and N73 contribute to the 4-amino-2-methyl-5-(diphosphooxymethyl)pyrimidine site. 2 residues coordinate Mg(2+): D74 and D93. S112 lines the 4-amino-2-methyl-5-(diphosphooxymethyl)pyrimidine pocket. Residue 143–145 (TPT) coordinates 2-[(2R,5Z)-2-carboxy-4-methylthiazol-5(2H)-ylidene]ethyl phosphate. K146 is a 4-amino-2-methyl-5-(diphosphooxymethyl)pyrimidine binding site. Position 192 (G192) interacts with 2-[(2R,5Z)-2-carboxy-4-methylthiazol-5(2H)-ylidene]ethyl phosphate.

This sequence belongs to the thiamine-phosphate synthase family. Mg(2+) serves as cofactor.

It carries out the reaction 2-[(2R,5Z)-2-carboxy-4-methylthiazol-5(2H)-ylidene]ethyl phosphate + 4-amino-2-methyl-5-(diphosphooxymethyl)pyrimidine + 2 H(+) = thiamine phosphate + CO2 + diphosphate. It catalyses the reaction 2-(2-carboxy-4-methylthiazol-5-yl)ethyl phosphate + 4-amino-2-methyl-5-(diphosphooxymethyl)pyrimidine + 2 H(+) = thiamine phosphate + CO2 + diphosphate. The catalysed reaction is 4-methyl-5-(2-phosphooxyethyl)-thiazole + 4-amino-2-methyl-5-(diphosphooxymethyl)pyrimidine + H(+) = thiamine phosphate + diphosphate. The protein operates within cofactor biosynthesis; thiamine diphosphate biosynthesis; thiamine phosphate from 4-amino-2-methyl-5-diphosphomethylpyrimidine and 4-methyl-5-(2-phosphoethyl)-thiazole: step 1/1. Functionally, condenses 4-methyl-5-(beta-hydroxyethyl)thiazole monophosphate (THZ-P) and 2-methyl-4-amino-5-hydroxymethyl pyrimidine pyrophosphate (HMP-PP) to form thiamine monophosphate (TMP). In Arthrobacter sp. (strain FB24), this protein is Thiamine-phosphate synthase.